A 681-amino-acid polypeptide reads, in one-letter code: Chaperone protein htpG (681 aa).

The a; substrate-binding stretch occupies residues 1–326; it reads MQKGNIGVTT…SPDIPLNVSR (326 aa). Positions 327-545 are b; sequence SYLQSDSNVK…YMRRMKEMAN (219 aa). Positions 546 to 681 are c; the sequence is IQAGMSFYGE…NFVKRSIELI (136 aa).

The protein belongs to the heat shock protein 90 family. As to quaternary structure, homodimer.

Its subcellular location is the cytoplasm. In terms of biological role, molecular chaperone. Has ATPase activity. This chain is Chaperone protein htpG, found in Bacteroides fragilis (strain YCH46).